Reading from the N-terminus, the 295-residue chain is Aspartate carbamoyltransferase catalytic subunit (295 aa).

2 residues coordinate carbamoyl phosphate: Arg49 and Thr50. Lys77 contributes to the L-aspartate binding site. Arg99, His127, and Gln130 together coordinate carbamoyl phosphate. The L-aspartate site is built by Arg161 and Arg212. 2 residues coordinate carbamoyl phosphate: Gly251 and Pro252.

It belongs to the aspartate/ornithine carbamoyltransferase superfamily. ATCase family. Heterododecamer (2C3:3R2) of six catalytic PyrB chains organized as two trimers (C3), and six regulatory PyrI chains organized as three dimers (R2).

It catalyses the reaction carbamoyl phosphate + L-aspartate = N-carbamoyl-L-aspartate + phosphate + H(+). Its pathway is pyrimidine metabolism; UMP biosynthesis via de novo pathway; (S)-dihydroorotate from bicarbonate: step 2/3. Its function is as follows. Catalyzes the condensation of carbamoyl phosphate and aspartate to form carbamoyl aspartate and inorganic phosphate, the committed step in the de novo pyrimidine nucleotide biosynthesis pathway. The protein is Aspartate carbamoyltransferase catalytic subunit of Campylobacter jejuni subsp. jejuni serotype O:6 (strain 81116 / NCTC 11828).